The primary structure comprises 593 residues: Calnexin (593 aa).

Residues 1–20 form the signal peptide; it reads MEGKWLLCMLLVLGTTIVQA. Residues 21–482 are Lumenal-facing; the sequence is HEGHDDDMID…QMIEAAEERP (462 aa). 2 residues coordinate Ca(2+): Ser-75 and Asp-118. Lys-138 is subject to N6-acetyllysine. Cys-161 and Cys-195 are disulfide-bonded. An alpha-D-glucoside-binding residues include Tyr-165, Lys-167, Tyr-186, and Asp-193. Residues 261–346 are disordered; that stretch reads GNLLNDMTPP…AEKPEDWDED (86 aa). Residues 277–410 form a p domain (Extended arm) region; sequence IEDPEDQKPE…RKIPNPDFFE (134 aa). 5 repeat units span residues 279–290, 296–307, 315–326, 334–345, and 349–359. 4 X approximate repeats stretches follow at residues 279 to 345 and 349 to 406; these read DPED…DWDE and GEWE…IPNP. Positions 282–320 are enriched in basic and acidic residues; sequence DQKPEDWDERPKIPDPDAVKPDDWNEDAPAKIPDEEATK. The span at 324–346 shows a compositional bias: acidic residues; sequence WLDDEPEYVPDPDAEKPEDWDED. Positions 327–360 are interaction with PPIB; sequence DEPEYVPDPDAEKPEDWDEDMDGEWEAPQIANPK. Cys-361 and Cys-367 are joined by a disulfide. Tandem repeats lie at residues 368–378, 382–392, and 396–406. Residue Glu-426 coordinates an alpha-D-glucoside. Asp-437 contributes to the Ca(2+) binding site. A helical membrane pass occupies residues 483 to 503; it reads WLWVVYVLTVALPVFLVILFC. S-palmitoyl cysteine attachment occurs at residues Cys-503 and Cys-504. Topologically, residues 504–593 are cytoplasmic; that stretch reads CSGKKQSSPV…SPRNRKPRRE (90 aa). The segment at 504 to 593 is sufficient to mediate interaction with SGIP1; sequence CSGKKQSSPV…SPRNRKPRRE (90 aa). The tract at residues 511–593 is disordered; that stretch reads SPVEYKKTDA…SPRNRKPRRE (83 aa). Positions 526-548 are enriched in acidic residues; the sequence is KEEEEEKEEEKDKGDEEEEGEEK. Ser-555 is modified (phosphoserine). Thr-563 carries the phosphothreonine modification. Ser-565 is modified (phosphoserine; by MAPK3). The residue at position 584 (Ser-584) is a Phosphoserine.

Belongs to the calreticulin family. Interacts with MAPK3/ERK1. Interacts with KCNH2. Associates with ribosomes. Interacts with SGIP1; involved in negative regulation of endocytosis. The palmitoylated form interacts with the ribosome-translocon complex component SSR1, promoting efficient folding of glycoproteins. Interacts with SERPINA2P/SERPINA2 and with the S and Z variants of SERPINA1. Interacts with PPIB. Interacts with ZNRF4. Interacts with SMIM22. Interacts with TMX2. Interacts with TMEM35A/NACHO and CHRNA7. Interacts with reticulophagy regulators RETREG2 and RETREG3. Interacts with DNM1L; may form part of a larger protein complex at the ER-mitochondrial interface during mitochondrial fission. Interacts with ADAM7. Post-translationally, phosphorylated at Ser-565 by MAPK3/ERK1. Phosphorylation by MAPK3/ERK1 increases its association with ribosomes. Palmitoylation by DHHC6 leads to the preferential localization to the perinuclear rough ER. It mediates the association of calnexin with the ribosome-translocon complex (RTC) which is required for efficient folding of glycosylated proteins. In terms of processing, ubiquitinated, leading to proteasomal degradation. Probably ubiquitinated by ZNRF4.

It localises to the endoplasmic reticulum membrane. It is found in the mitochondrion membrane. The protein resides in the melanosome membrane. Functionally, calcium-binding protein that interacts with newly synthesized monoglucosylated glycoproteins in the endoplasmic reticulum. It may act in assisting protein assembly and/or in the retention within the ER of unassembled protein subunits. It seems to play a major role in the quality control apparatus of the ER by the retention of incorrectly folded proteins. Associated with partial T-cell antigen receptor complexes that escape the ER of immature thymocytes, it may function as a signaling complex regulating thymocyte maturation. Additionally it may play a role in receptor-mediated endocytosis at the synapse. This Canis lupus familiaris (Dog) protein is Calnexin (CANX).